The following is a 470-amino-acid chain: Choline/ethanolamine transporter flvcr2a (470 aa).

The Cytoplasmic portion of the chain corresponds to Met-1 to Ser-23. Residues Ser-24–Gln-48 traverse the membrane as a helical segment. 3 residues coordinate choline: Asn-45, Ala-46, and Trp-49. The Extracellular segment spans residues Trp-49–Ser-66. Residues Ser-67–Arg-94 form a helical membrane-spanning segment. Over Lys-95–Gly-96 the chain is Cytoplasmic. A helical membrane pass occupies residues Leu-97–Val-116. Over Ala-117–Leu-123 the chain is Extracellular. Residues Phe-124 to Trp-152 form a helical membrane-spanning segment. 2 residues coordinate choline: Gln-138 and Leu-142. Residues Phe-153–Glu-157 lie on the Cytoplasmic side of the membrane. Residues Val-158 to Leu-183 traverse the membrane as a helical segment. Residues Val-184 to Glu-188 are Extracellular-facing. A helical membrane pass occupies residues Asp-189–Val-218. Topologically, residues Phe-219–Asn-254 are cytoplasmic. A helical transmembrane segment spans residues Lys-255–His-285. Tyr-272 is a binding site for choline. The Extracellular portion of the chain corresponds to Tyr-286–Glu-289. The chain crosses the membrane as a helical span at residues Glu-290 to Thr-318. At Lys-319–Thr-320 the chain is on the cytoplasmic side. The chain crosses the membrane as a helical span at residues Tyr-321–Leu-343. The Extracellular portion of the chain corresponds to Asn-344 to Gly-346. A helical transmembrane segment spans residues His-347–Leu-376. Residues Thr-377–Thr-384 lie on the Cytoplasmic side of the membrane. A helical membrane pass occupies residues Ser-385–His-410. Gln-394 contributes to the choline binding site. Residues Phe-411–Gly-412 lie on the Extracellular side of the membrane. Residues Thr-413–Lys-435 traverse the membrane as a helical segment. Over Ser-436–Met-470 the chain is Cytoplasmic. A compositionally biased stretch (polar residues) spans Gln-445–His-456. Positions Gln-445–Met-470 are disordered.

Belongs to the major facilitator superfamily. Feline leukemia virus subgroup C receptor (TC 2.A.1.28.1) family.

It localises to the cell membrane. The protein resides in the mitochondrion membrane. It is found in the endoplasmic reticulum membrane. It catalyses the reaction choline(out) = choline(in). The enzyme catalyses ethanolamine(in) = ethanolamine(out). It carries out the reaction heme b(in) = heme b(out). Its function is as follows. Choline uniporter that specifically mediates choline uptake at the blood-brain-barrier. Responsible for the majority of choline uptake across the blood-brain-barrier from the circulation into the brain. Choline, a nutrient critical for brain development, is a precursor of phosphatidylcholine, as well as betaine. Also mediates transport of ethanolamine. Choline and ethanolamine transport is not coupled with proton transport and is exclusively driven by the choline gradient across the plasma membrane. Also acts as a heme b transporter. The chain is Choline/ethanolamine transporter flvcr2a from Danio rerio (Zebrafish).